Here is a 54-residue protein sequence, read N- to C-terminus: ATP synthase F(0) complex subunit 8 (54 aa).

Residues 9–25 (WVFLFFLVWLVLGFLGL) form a helical membrane-spanning segment.

It belongs to the ATPase protein 8 family. In terms of assembly, component of the ATP synthase complex composed at least of ATP5F1A/subunit alpha, ATP5F1B/subunit beta, ATP5MC1/subunit c (homooctomer), MT-ATP6/subunit a, MT-ATP8/subunit 8, ATP5ME/subunit e, ATP5MF/subunit f, ATP5MG/subunit g, ATP5MK/subunit k, ATP5MJ/subunit j, ATP5F1C/subunit gamma, ATP5F1D/subunit delta, ATP5F1E/subunit epsilon, ATP5PF/subunit F6, ATP5PB/subunit b, ATP5PD/subunit d, ATP5PO/subunit OSCP. ATP synthase complex consists of a soluble F(1) head domain (subunits alpha(3) and beta(3)) - the catalytic core - and a membrane F(0) domain - the membrane proton channel (subunits c, a, 8, e, f, g, k and j). These two domains are linked by a central stalk (subunits gamma, delta, and epsilon) rotating inside the F1 region and a stationary peripheral stalk (subunits F6, b, d, and OSCP).

The protein resides in the mitochondrion membrane. In terms of biological role, subunit 8, of the mitochondrial membrane ATP synthase complex (F(1)F(0) ATP synthase or Complex V) that produces ATP from ADP in the presence of a proton gradient across the membrane which is generated by electron transport complexes of the respiratory chain. ATP synthase complex consist of a soluble F(1) head domain - the catalytic core - and a membrane F(1) domain - the membrane proton channel. These two domains are linked by a central stalk rotating inside the F(1) region and a stationary peripheral stalk. During catalysis, ATP synthesis in the catalytic domain of F(1) is coupled via a rotary mechanism of the central stalk subunits to proton translocation. In vivo, can only synthesize ATP although its ATP hydrolase activity can be activated artificially in vitro. Part of the complex F(0) domain. In Branchiostoma lanceolatum (Common lancelet), this protein is ATP synthase F(0) complex subunit 8.